A 143-amino-acid polypeptide reads, in one-letter code: Large ribosomal subunit protein uL16 (143 aa).

The segment covering 1 to 17 (MLQPKKTKFRRSQKGRM) has biased composition (basic residues). Positions 1–25 (MLQPKKTKFRRSQKGRMKGNAQRGN) are disordered.

Belongs to the universal ribosomal protein uL16 family. Part of the 50S ribosomal subunit.

Its function is as follows. Binds 23S rRNA and is also seen to make contacts with the A and possibly P site tRNAs. This is Large ribosomal subunit protein uL16 from Azobacteroides pseudotrichonymphae genomovar. CFP2.